The primary structure comprises 207 residues: Large ribosomal subunit protein uL4 (207 aa).

Positions 45-78 (RQGTHAVKNRSARRGGGRKPWRQKGTGRARQGSI) are disordered. Positions 51–71 (VKNRSARRGGGRKPWRQKGTG) are enriched in basic residues.

This sequence belongs to the universal ribosomal protein uL4 family. Part of the 50S ribosomal subunit.

Functionally, one of the primary rRNA binding proteins, this protein initially binds near the 5'-end of the 23S rRNA. It is important during the early stages of 50S assembly. It makes multiple contacts with different domains of the 23S rRNA in the assembled 50S subunit and ribosome. Its function is as follows. Forms part of the polypeptide exit tunnel. The protein is Large ribosomal subunit protein uL4 of Lactiplantibacillus plantarum (strain ATCC BAA-793 / NCIMB 8826 / WCFS1) (Lactobacillus plantarum).